An 81-amino-acid polypeptide reads, in one-letter code: ATP synthase subunit c (81 aa).

2 helical membrane passes run 7 to 27 (AASV…PGIG) and 57 to 77 (LAFM…LLFA).

The protein belongs to the ATPase C chain family. F-type ATPases have 2 components, F(1) - the catalytic core - and F(0) - the membrane proton channel. F(1) has five subunits: alpha(3), beta(3), gamma(1), delta(1), epsilon(1). F(0) has four main subunits: a(1), b(1), b'(1) and c(10-14). The alpha and beta chains form an alternating ring which encloses part of the gamma chain. F(1) is attached to F(0) by a central stalk formed by the gamma and epsilon chains, while a peripheral stalk is formed by the delta, b and b' chains.

It is found in the cellular thylakoid membrane. F(1)F(0) ATP synthase produces ATP from ADP in the presence of a proton or sodium gradient. F-type ATPases consist of two structural domains, F(1) containing the extramembraneous catalytic core and F(0) containing the membrane proton channel, linked together by a central stalk and a peripheral stalk. During catalysis, ATP synthesis in the catalytic domain of F(1) is coupled via a rotary mechanism of the central stalk subunits to proton translocation. Functionally, key component of the F(0) channel; it plays a direct role in translocation across the membrane. A homomeric c-ring of between 10-14 subunits forms the central stalk rotor element with the F(1) delta and epsilon subunits. This Synechococcus sp. (strain CC9311) protein is ATP synthase subunit c.